Here is a 29-residue protein sequence, read N- to C-terminus: Cyclotide mden-A (29 aa).

The segment at residues Gly1–Asn29 is a cross-link (cyclopeptide (Gly-Asn)). Disulfide bonds link Cys5–Cys19, Cys9–Cys21, and Cys14–Cys26.

It belongs to the cyclotide family. Moebius subfamily. Post-translationally, this is a cyclic peptide.

Functionally, probably participates in a plant defense mechanism. This is Cyclotide mden-A from Melicytus dentatus (Tree violet).